The chain runs to 112 residues: CRISPR-associated endoribonuclease Cas2 2 (112 aa).

Position 15 (D15) interacts with Mg(2+).

The protein belongs to the CRISPR-associated endoribonuclease Cas2 protein family. As to quaternary structure, homodimer, forms a heterotetramer with a Cas1 homodimer. Mg(2+) is required as a cofactor.

Its function is as follows. CRISPR (clustered regularly interspaced short palindromic repeat), is an adaptive immune system that provides protection against mobile genetic elements (viruses, transposable elements and conjugative plasmids). CRISPR clusters contain sequences complementary to antecedent mobile elements and target invading nucleic acids. CRISPR clusters are transcribed and processed into CRISPR RNA (crRNA). Functions as a ssRNA-specific endoribonuclease. Involved in the integration of spacer DNA into the CRISPR cassette. In Rhodospirillum rubrum (strain ATCC 11170 / ATH 1.1.1 / DSM 467 / LMG 4362 / NCIMB 8255 / S1), this protein is CRISPR-associated endoribonuclease Cas2 2.